A 508-amino-acid polypeptide reads, in one-letter code: MGLPWYRVHTVVLNDPGRLISVHIMHTALVAGWAGSMTLYELAVFDPSDPVLDPMWRQGMFVIPFMTRLGIKDSWSGWNITGETVINPGIWSYEGVAVAHIVFSGLCFLAAIWHWVYWDLDIFCDERTGKRCLDLPKVFGIHLFLSGVACFGFGAFHVTGLYGPGIWVSDPYGLTGKIQPVDPAWGAEGFDPFVPGGIASHHIAAGILGILAGLFHLSVRPPQRLYVGLRMGNIETVLSSSIAAVFFAAFIVAGTMWYGSATTPVELFGPTRYQWDQGYFQQEIDRRVRAGLAENLSLSEAWSKIPEKLAFYDYIGNNPAKGGLFRAGAMDNGDGIAVGWLGHPIFKDKEGNELFVRRMPTFFETFPVVLVDKEGIVKADVPFRRAESKYSVEQVGVTVEFYGGGLDRVSFGDPAIVKKYARRAQLGEIFELDRATLKSDGVFRSSPRGWFTFGHATFALLFFSGHIWHGARTLFRDVFAGIDSDLDDRIEFGAFQKLGDPTTKRQVV.

6 helical membrane passes run 21–36 (SVHIMHTALVAGWAGS), 101–115 (IVFSGLCFLAAIWHW), 140–156 (GIHLFLSGVACFGFGAF), 203–218 (IAAGILGILAGLFHLS), 237–252 (VLSSSIAAVFFAAFIV), and 457–472 (TFALLFFSGHIWHGAR).

Belongs to the PsbB/PsbC family. PsbB subfamily. PSII is composed of 1 copy each of membrane proteins PsbA, PsbB, PsbC, PsbD, PsbE, PsbF, PsbH, PsbI, PsbJ, PsbK, PsbL, PsbM, PsbT, PsbX, PsbY, PsbZ, Psb30/Ycf12, at least 3 peripheral proteins of the oxygen-evolving complex and a large number of cofactors. It forms dimeric complexes. The cofactor is Binds multiple chlorophylls. PSII binds additional chlorophylls, carotenoids and specific lipids..

The protein resides in the plastid. It is found in the chloroplast thylakoid membrane. In terms of biological role, one of the components of the core complex of photosystem II (PSII). It binds chlorophyll and helps catalyze the primary light-induced photochemical processes of PSII. PSII is a light-driven water:plastoquinone oxidoreductase, using light energy to abstract electrons from H(2)O, generating O(2) and a proton gradient subsequently used for ATP formation. This Pinus thunbergii (Japanese black pine) protein is Photosystem II CP47 reaction center protein.